Reading from the N-terminus, the 121-residue chain is MMSTTLFKDFTFEAAHRLPHVPEGHKCGRLHGHSFMVRLEITGEVDPHTGWIIDFAELKAAFKPTYERLDHHYLNDIPGLENPTSEVLAKWIWDQVKPVVPLLSAVMVKETCTAGCIYRGE.

His-16 serves as a coordination point for Zn(2+). Catalysis depends on Cys-27, which acts as the Proton acceptor. Residues His-31 and His-33 each coordinate Zn(2+). Catalysis depends on charge relay system residues His-71 and Glu-110.

Belongs to the PTPS family. QueD subfamily. Requires Zn(2+) as cofactor.

The catalysed reaction is 7,8-dihydroneopterin 3'-triphosphate + H2O = 6-carboxy-5,6,7,8-tetrahydropterin + triphosphate + acetaldehyde + 2 H(+). Its pathway is purine metabolism; 7-cyano-7-deazaguanine biosynthesis. Its function is as follows. Catalyzes the conversion of 7,8-dihydroneopterin triphosphate (H2NTP) to 6-carboxy-5,6,7,8-tetrahydropterin (CPH4) and acetaldehyde. This chain is 6-carboxy-5,6,7,8-tetrahydropterin synthase (queD), found in Shigella flexneri.